Reading from the N-terminus, the 741-residue chain is NAD(P)H-quinone oxidoreductase subunit 5, chloroplastic (741 aa).

16 helical membrane passes run 9-29, 40-60, 89-109, 125-145, 147-167, 185-205, 219-239, 258-278, 284-304, 327-347, 354-374, 396-416, 425-445, 549-569, 605-625, and 721-741; these read WIIP…LLLF, WAFQ…NLSI, IDPL…MVLI, FAYM…SNLI, IYIF…FWFT, GDFG…SFEF, NEVN…GAIA, TPIS…FLVA, FIVI…TVFF, LGYM…FHLI, ALLF…VGYC, NSFL…CFWS, WLYS…TAFY, LFPI…GIPF, VFSV…YKPV, and YLFF…FLNF.

This sequence belongs to the complex I subunit 5 family. In terms of assembly, NDH is composed of at least 16 different subunits, 5 of which are encoded in the nucleus.

It localises to the plastid. It is found in the chloroplast thylakoid membrane. The catalysed reaction is a plastoquinone + NADH + (n+1) H(+)(in) = a plastoquinol + NAD(+) + n H(+)(out). It catalyses the reaction a plastoquinone + NADPH + (n+1) H(+)(in) = a plastoquinol + NADP(+) + n H(+)(out). In terms of biological role, NDH shuttles electrons from NAD(P)H:plastoquinone, via FMN and iron-sulfur (Fe-S) centers, to quinones in the photosynthetic chain and possibly in a chloroplast respiratory chain. The immediate electron acceptor for the enzyme in this species is believed to be plastoquinone. Couples the redox reaction to proton translocation, and thus conserves the redox energy in a proton gradient. This Flaveria ramosissima (Yellowtops) protein is NAD(P)H-quinone oxidoreductase subunit 5, chloroplastic (ndhF).